A 279-amino-acid chain; its full sequence is Universal stress protein MT2087 (279 aa).

The protein belongs to the universal stress protein A family.

This is Universal stress protein MT2087 from Mycobacterium tuberculosis (strain CDC 1551 / Oshkosh).